The following is a 507-amino-acid chain: Glycine, alanine and asparagine-rich protein (507 aa).

A signal peptide spans 1–17 (MLRVPLLVLCLALSVGA). Residues 158–185 (SAQALASATAELQAAQDAYDQASAYAEA) adopt a coiled-coil conformation. The span at 462–498 (GNGNGGNGRNGNGGNGRNGNGGNGGNGNGRNGRGGRY) shows a compositional bias: gly residues. Residues 462-507 (GNGNGGNGRNGNGGNGRNGNGGNGGNGNGRNGRGGRYYYGSSDYYY) form a disordered region.

In terms of tissue distribution, component of the acid-soluble and acid-insoluble organic matrix of calcified shell layers (at protein level).

It localises to the secreted. The polypeptide is Glycine, alanine and asparagine-rich protein (Haliotis asinina (Donkey's ear abalone)).